Consider the following 75-residue polypeptide: U6-lycotoxin-Ls1g (75 aa).

The N-terminal stretch at 1 to 21 is a signal peptide; that stretch reads MKLLLFTALVLVVISLIEVEA. Residues 22–25 constitute a propeptide that is removed on maturation; the sequence is ENER.

It belongs to the neurotoxin 19 (CSTX) family. 06 (U6-Lctx) subfamily. Post-translationally, contains 4 disulfide bonds. Expressed by the venom gland.

The protein resides in the secreted. In Lycosa singoriensis (Wolf spider), this protein is U6-lycotoxin-Ls1g.